Here is a 318-residue protein sequence, read N- to C-terminus: Putative S-adenosyl-L-methionine-dependent methyltransferase MMAR_1595 (318 aa).

S-adenosyl-L-methionine is bound by residues E132 and 161-162 (DL).

Belongs to the UPF0677 family.

Exhibits S-adenosyl-L-methionine-dependent methyltransferase activity. This is Putative S-adenosyl-L-methionine-dependent methyltransferase MMAR_1595 from Mycobacterium marinum (strain ATCC BAA-535 / M).